The following is a 201-amino-acid chain: Imidazole glycerol phosphate synthase subunit HisH (201 aa).

One can recognise a Glutamine amidotransferase type-1 domain in the interval 1–201 (MVFIADYGAG…LQVLKNFAEF (201 aa)). Cys-79 functions as the Nucleophile in the catalytic mechanism. Active-site residues include His-183 and Glu-185.

In terms of assembly, heterodimer of HisH and HisF.

The protein resides in the cytoplasm. It carries out the reaction 5-[(5-phospho-1-deoxy-D-ribulos-1-ylimino)methylamino]-1-(5-phospho-beta-D-ribosyl)imidazole-4-carboxamide + L-glutamine = D-erythro-1-(imidazol-4-yl)glycerol 3-phosphate + 5-amino-1-(5-phospho-beta-D-ribosyl)imidazole-4-carboxamide + L-glutamate + H(+). The catalysed reaction is L-glutamine + H2O = L-glutamate + NH4(+). Its pathway is amino-acid biosynthesis; L-histidine biosynthesis; L-histidine from 5-phospho-alpha-D-ribose 1-diphosphate: step 5/9. Functionally, IGPS catalyzes the conversion of PRFAR and glutamine to IGP, AICAR and glutamate. The HisH subunit catalyzes the hydrolysis of glutamine to glutamate and ammonia as part of the synthesis of IGP and AICAR. The resulting ammonia molecule is channeled to the active site of HisF. The chain is Imidazole glycerol phosphate synthase subunit HisH from Chlorobaculum tepidum (strain ATCC 49652 / DSM 12025 / NBRC 103806 / TLS) (Chlorobium tepidum).